The sequence spans 177 residues: Ribulose bisphosphate carboxylase small subunit, chloroplastic (177 aa).

Residues 1–55 (MASLMSNAAVVTASTAAQANMVAPFSGLKSTSAFPVSRKSNVDITSLATNGGRVN) constitute a chloroplast transit peptide.

It belongs to the RuBisCO small chain family. As to quaternary structure, heterohexadecamer of 8 large and 8 small subunits.

The protein resides in the plastid. It is found in the chloroplast. Its function is as follows. RuBisCO catalyzes two reactions: the carboxylation of D-ribulose 1,5-bisphosphate, the primary event in carbon dioxide fixation, as well as the oxidative fragmentation of the pentose substrate. Both reactions occur simultaneously and in competition at the same active site. Although the small subunit is not catalytic it is essential for maximal activity. The chain is Ribulose bisphosphate carboxylase small subunit, chloroplastic from Silene latifolia subsp. alba (White campion).